The primary structure comprises 464 residues: Argininosuccinate lyase (464 aa).

The protein belongs to the lyase 1 family. Argininosuccinate lyase subfamily.

It is found in the cytoplasm. The catalysed reaction is 2-(N(omega)-L-arginino)succinate = fumarate + L-arginine. The protein operates within amino-acid biosynthesis; L-arginine biosynthesis; L-arginine from L-ornithine and carbamoyl phosphate: step 3/3. The chain is Argininosuccinate lyase from Chlorobium phaeobacteroides (strain DSM 266 / SMG 266 / 2430).